A 269-amino-acid polypeptide reads, in one-letter code: Mitochondrial distribution and morphology protein 12 (269 aa).

An SMP-LTD domain is found at 1–269; sequence MSLEVNWEQI…WPNWIEFQGV (269 aa). The interval 72 to 119 is disordered; sequence ERAGTGEGDEDDGRVAPTSTPMKHQTSGSSDQTDASNPISPSTSHDHE. The segment covering 88 to 114 has biased composition (polar residues); that stretch reads PTSTPMKHQTSGSSDQTDASNPISPST.

The protein belongs to the MDM12 family. In terms of assembly, component of the ER-mitochondria encounter structure (ERMES) or MDM complex, composed of MMM1, MDM10, MDM12 and MDM34. An MMM1 homodimer associates with one molecule of MDM12 on each side in a pairwise head-to-tail manner, and the SMP-LTD domains of MMM1 and MDM12 generate a continuous hydrophobic tunnel for phospholipid trafficking.

Its subcellular location is the mitochondrion outer membrane. The protein resides in the endoplasmic reticulum membrane. Its function is as follows. Component of the ERMES/MDM complex, which serves as a molecular tether to connect the endoplasmic reticulum (ER) and mitochondria. Components of this complex are involved in the control of mitochondrial shape and protein biogenesis, and function in nonvesicular lipid trafficking between the ER and mitochondria. MDM12 is required for the interaction of the ER-resident membrane protein MMM1 and the outer mitochondrial membrane-resident beta-barrel protein MDM10. The MDM12-MMM1 subcomplex functions in the major beta-barrel assembly pathway that is responsible for biogenesis of all mitochondrial outer membrane beta-barrel proteins, and acts in a late step after the SAM complex. The MDM10-MDM12-MMM1 subcomplex further acts in the TOM40-specific pathway after the action of the MDM12-MMM1 complex. Essential for establishing and maintaining the structure of mitochondria and maintenance of mtDNA nucleoids. The sequence is that of Mitochondrial distribution and morphology protein 12 from Komagataella phaffii (strain GS115 / ATCC 20864) (Yeast).